Here is a 130-residue protein sequence, read N- to C-terminus: Small ribosomal subunit protein uS11 (130 aa).

Belongs to the universal ribosomal protein uS11 family. As to quaternary structure, part of the 30S ribosomal subunit. Interacts with proteins S7 and S18. Binds to IF-3.

Functionally, located on the platform of the 30S subunit, it bridges several disparate RNA helices of the 16S rRNA. Forms part of the Shine-Dalgarno cleft in the 70S ribosome. This chain is Small ribosomal subunit protein uS11, found in Synechococcus sp. (strain CC9605).